The sequence spans 212 residues: Orotate phosphoribosyltransferase (212 aa).

5-phospho-alpha-D-ribose 1-diphosphate-binding positions include Arg97, Lys101, His103, and 123–131; that span reads EDLISTGGS. Ser127 contacts orotate.

The protein belongs to the purine/pyrimidine phosphoribosyltransferase family. PyrE subfamily. In terms of assembly, homodimer. Mg(2+) serves as cofactor.

The enzyme catalyses orotidine 5'-phosphate + diphosphate = orotate + 5-phospho-alpha-D-ribose 1-diphosphate. It participates in pyrimidine metabolism; UMP biosynthesis via de novo pathway; UMP from orotate: step 1/2. In terms of biological role, catalyzes the transfer of a ribosyl phosphate group from 5-phosphoribose 1-diphosphate to orotate, leading to the formation of orotidine monophosphate (OMP). The chain is Orotate phosphoribosyltransferase from Bacteroides thetaiotaomicron (strain ATCC 29148 / DSM 2079 / JCM 5827 / CCUG 10774 / NCTC 10582 / VPI-5482 / E50).